A 75-amino-acid chain; its full sequence is UPF0181 protein ETA_15280 (75 aa).

The protein belongs to the UPF0181 family.

The protein is UPF0181 protein ETA_15280 of Erwinia tasmaniensis (strain DSM 17950 / CFBP 7177 / CIP 109463 / NCPPB 4357 / Et1/99).